The primary structure comprises 292 residues: Cbb3-type cytochrome c oxidase subunit CcoP (292 aa).

The next 2 membrane-spanning stretches (helical) occupy residues phenylalanine 11–isoleucine 31 and valine 62–glycine 82. Cytochrome c domains lie at glutamate 116 to isoleucine 195 and glutamine 205 to lysine 288. Residues cysteine 129, cysteine 132, histidine 133, methionine 174, cysteine 219, cysteine 222, histidine 223, and methionine 264 each contribute to the heme c site.

The protein belongs to the CcoP / FixP family. Component of the cbb3-type cytochrome c oxidase at least composed of CcoN, CcoO, CcoQ and CcoP. The cofactor is heme c.

The protein resides in the cell inner membrane. Its pathway is energy metabolism; oxidative phosphorylation. Its function is as follows. C-type cytochrome. Part of the cbb3-type cytochrome c oxidase complex. CcoP subunit is required for transferring electrons from donor cytochrome c via its heme groups to CcoO subunit. From there, electrons are shuttled to the catalytic binuclear center of CcoN subunit where oxygen reduction takes place. The complex also functions as a proton pump. The sequence is that of Cbb3-type cytochrome c oxidase subunit CcoP from Helicobacter pylori (Campylobacter pylori).